Here is a 136-residue protein sequence, read N- to C-terminus: Large-conductance mechanosensitive channel (136 aa).

The next 2 helical transmembrane spans lie at 9-29 (AFAS…GAAF) and 79-99 (IQTI…LKAI).

Belongs to the MscL family. As to quaternary structure, homopentamer.

It is found in the cell inner membrane. Its function is as follows. Channel that opens in response to stretch forces in the membrane lipid bilayer. May participate in the regulation of osmotic pressure changes within the cell. This chain is Large-conductance mechanosensitive channel, found in Shewanella sp. (strain ANA-3).